A 314-amino-acid chain; its full sequence is tRNA dimethylallyltransferase (314 aa).

13–20 serves as a coordination point for ATP; the sequence is GPTAVGKT. 15 to 20 serves as a coordination point for substrate; that stretch reads TAVGKT. Residues 38-41 form an interaction with substrate tRNA region; sequence DSMQ.

Belongs to the IPP transferase family. Monomer. Mg(2+) serves as cofactor.

It carries out the reaction adenosine(37) in tRNA + dimethylallyl diphosphate = N(6)-dimethylallyladenosine(37) in tRNA + diphosphate. In terms of biological role, catalyzes the transfer of a dimethylallyl group onto the adenine at position 37 in tRNAs that read codons beginning with uridine, leading to the formation of N6-(dimethylallyl)adenosine (i(6)A). The chain is tRNA dimethylallyltransferase from Bacillus subtilis (strain 168).